The sequence spans 164 residues: Glycine cleavage system H protein, mitochondrial (164 aa).

The N-terminal 39 residues, 1 to 39 (MAWLVLRRLGPVLAPRCPRLSLRPQVPAVRRLGTGSLLL), are a transit peptide targeting the mitochondrion. The region spanning 57–139 (IGTVGISNFA…YQDGWLIKMT (83 aa)) is the Lipoyl-binding domain. Residue K98 is modified to N6-lipoyllysine.

The protein belongs to the GcvH family. In terms of assembly, the glycine cleavage system is composed of four proteins: P (GLDC), T (GCST), L (DLD) and H (GCSH). Interacts with GLDC. Requires (R)-lipoate as cofactor.

The protein localises to the mitochondrion. Its function is as follows. The glycine cleavage system catalyzes the degradation of glycine. The H protein (GCSH) shuttles the methylamine group of glycine from the P protein (GLDC) to the T protein (GCST). Has a pivotal role in the lipoylation of enzymes involved in cellular energetics such as the mitochondrial dihydrolipoyllysine-residue acetyltransferase component of pyruvate dehydrogenase complex (DLAT), and the mitochondrial dihydrolipoyllysine-residue succinyltransferase component of 2-oxoglutarate dehydrogenase complex (DLST). This Gallus gallus (Chicken) protein is Glycine cleavage system H protein, mitochondrial.